The following is a 435-amino-acid chain: Serine/threonine-protein kinase 40 (435 aa).

Residues 1 to 10 (MKRRASDRGA) are compositionally biased toward basic and acidic residues. Residues 1–25 (MKRRASDRGAGETSARAKALGSGIS) are disordered. Residues 35 to 331 (FILGPRLGNS…ADVLEALSAI (297 aa)) enclose the Protein kinase domain. Residues 41–49 (LGNSPVPSI) and Lys-66 contribute to the ATP site. Residue Arg-196 is the Proton acceptor of the active site.

The protein belongs to the protein kinase superfamily. CAMK Ser/Thr protein kinase family. As to expression, strongly expressed in heart, brain, placenta, lung, skeletal muscle, kidney, spleen, thymus, prostate, liver, pancreas, testis, ovary, small intestine, colon and peripheral blood leukocytes.

The protein resides in the nucleus. Its subcellular location is the cytoplasm. It catalyses the reaction L-seryl-[protein] + ATP = O-phospho-L-seryl-[protein] + ADP + H(+). The enzyme catalyses L-threonyl-[protein] + ATP = O-phospho-L-threonyl-[protein] + ADP + H(+). In terms of biological role, may be a negative regulator of NF-kappa-B and p53-mediated gene transcription. This Homo sapiens (Human) protein is Serine/threonine-protein kinase 40 (STK40).